Here is a 119-residue protein sequence, read N- to C-terminus: Protein Wnt-4 (119 aa).

Serine 1 is lipidated: O-palmitoleoyl serine; by PORCN. Cystine bridges form between cysteine 69-cysteine 100 and cysteine 85-cysteine 95. N-linked (GlcNAc...) asparagine glycosylation is present at asparagine 86.

The protein belongs to the Wnt family. Palmitoleoylation is required for efficient binding to frizzled receptors. Depalmitoleoylation leads to Wnt signaling pathway inhibition.

The protein localises to the secreted. It is found in the extracellular space. It localises to the extracellular matrix. Functionally, ligand for members of the frizzled family of seven transmembrane receptors. Plays an important role in embryonic development. In Plethodon jordani (Red-cheeked salamander), this protein is Protein Wnt-4 (WNT-4).